The primary structure comprises 364 residues: UDP-N-acetylglucosamine--N-acetylmuramyl-(pentapeptide) pyrophosphoryl-undecaprenol N-acetylglucosamine transferase 1 (364 aa).

UDP-N-acetyl-alpha-D-glucosamine contacts are provided by residues threonine 10–glycine 12, asparagine 124, serine 195, isoleucine 250, and glutamine 295.

Belongs to the glycosyltransferase 28 family. MurG subfamily.

The protein localises to the cell membrane. The catalysed reaction is di-trans,octa-cis-undecaprenyl diphospho-N-acetyl-alpha-D-muramoyl-L-alanyl-D-glutamyl-meso-2,6-diaminopimeloyl-D-alanyl-D-alanine + UDP-N-acetyl-alpha-D-glucosamine = di-trans,octa-cis-undecaprenyl diphospho-[N-acetyl-alpha-D-glucosaminyl-(1-&gt;4)]-N-acetyl-alpha-D-muramoyl-L-alanyl-D-glutamyl-meso-2,6-diaminopimeloyl-D-alanyl-D-alanine + UDP + H(+). It functions in the pathway cell wall biogenesis; peptidoglycan biosynthesis. Functionally, cell wall formation. Catalyzes the transfer of a GlcNAc subunit on undecaprenyl-pyrophosphoryl-MurNAc-pentapeptide (lipid intermediate I) to form undecaprenyl-pyrophosphoryl-MurNAc-(pentapeptide)GlcNAc (lipid intermediate II). The sequence is that of UDP-N-acetylglucosamine--N-acetylmuramyl-(pentapeptide) pyrophosphoryl-undecaprenol N-acetylglucosamine transferase 1 from Bacillus cereus (strain ATCC 14579 / DSM 31 / CCUG 7414 / JCM 2152 / NBRC 15305 / NCIMB 9373 / NCTC 2599 / NRRL B-3711).